The primary structure comprises 167 residues: Cyclic pyranopterin monophosphate synthase 2 (167 aa).

The segment at 1-23 is disordered; that stretch reads MARASGASDYRSGELSHQDERGA. Positions 11 to 23 are enriched in basic and acidic residues; sequence RSGELSHQDERGA. Substrate is bound by residues 86 to 88 and 122 to 123; these read LCH and ME. Asp137 is a catalytic residue.

Belongs to the MoaC family. In terms of assembly, homohexamer; trimer of dimers.

The enzyme catalyses (8S)-3',8-cyclo-7,8-dihydroguanosine 5'-triphosphate = cyclic pyranopterin phosphate + diphosphate. Its pathway is cofactor biosynthesis; molybdopterin biosynthesis. Its function is as follows. Catalyzes the conversion of (8S)-3',8-cyclo-7,8-dihydroguanosine 5'-triphosphate to cyclic pyranopterin monophosphate (cPMP). In Mycobacterium bovis (strain ATCC BAA-935 / AF2122/97), this protein is Cyclic pyranopterin monophosphate synthase 2 (moaC2).